Consider the following 657-residue polypeptide: Translation factor GUF1, mitochondrial (657 aa).

The N-terminal 39 residues, 1-39 (MRGCLQSVKWLTSAVRQSQSLTSSTRFPRRLFNTSTLHY), are a transit peptide targeting the mitochondrion. The tr-type G domain maps to 59 to 239 (ERFRNFCIVA…TVIEQVPAPV (181 aa)). Residues 68–75 (AHVDHGKS), 132–136 (DTPGH), and 186–189 (NKVD) contribute to the GTP site.

The protein belongs to the TRAFAC class translation factor GTPase superfamily. Classic translation factor GTPase family. LepA subfamily.

The protein localises to the mitochondrion inner membrane. The enzyme catalyses GTP + H2O = GDP + phosphate + H(+). Promotes mitochondrial protein synthesis. May act as a fidelity factor of the translation reaction, by catalyzing a one-codon backward translocation of tRNAs on improperly translocated ribosomes. Binds to mitochondrial ribosomes in a GTP-dependent manner. In Blastomyces gilchristii (strain SLH14081) (Blastomyces dermatitidis), this protein is Translation factor GUF1, mitochondrial.